Reading from the N-terminus, the 247-residue chain is Small ribosomal subunit protein uS3 (247 aa).

Positions 18-87 constitute a KH type-2 domain; sequence IDEYLAKRFY…NPQITVRRVE (70 aa). Residues 226 to 247 form a disordered region; it reads QQGEVVGEAPNTPLEEQGQKQG.

The protein belongs to the universal ribosomal protein uS3 family. Part of the 30S ribosomal subunit.

Binds the lower part of the 30S subunit head. In Hyperthermus butylicus (strain DSM 5456 / JCM 9403 / PLM1-5), this protein is Small ribosomal subunit protein uS3.